The sequence spans 333 residues: Tetraacyldisaccharide 4'-kinase (333 aa).

55–62 (TAGGNGKT) is an ATP binding site.

The protein belongs to the LpxK family.

The catalysed reaction is a lipid A disaccharide + ATP = a lipid IVA + ADP + H(+). It functions in the pathway glycolipid biosynthesis; lipid IV(A) biosynthesis; lipid IV(A) from (3R)-3-hydroxytetradecanoyl-[acyl-carrier-protein] and UDP-N-acetyl-alpha-D-glucosamine: step 6/6. Its function is as follows. Transfers the gamma-phosphate of ATP to the 4'-position of a tetraacyldisaccharide 1-phosphate intermediate (termed DS-1-P) to form tetraacyldisaccharide 1,4'-bis-phosphate (lipid IVA). This Pectobacterium carotovorum subsp. carotovorum (strain PC1) protein is Tetraacyldisaccharide 4'-kinase.